Reading from the N-terminus, the 408-residue chain is Glutaryl-CoA dehydrogenase, mitochondrial (408 aa).

A mitochondrion-targeting transit peptide spans 1-13 (KGGKTQGRSAKSS). Substrate is bound by residues 107 to 108 (RS) and serine 156. FAD is bound by residues 147–156 (FGLTEPNHGS), serine 156, and 182–184 (WIT). N6-acetyllysine is present on lysine 210. Residue 257–264 (FGCLNNAR) coordinates substrate. FAD contacts are provided by residues arginine 289, glutamine 300, and 357–361 (DMLGG). Glutamate 384 acts as the Proton acceptor in catalysis. Glycine 385 provides a ligand contact to substrate. FAD-binding positions include threonine 386, 386–388 (THD), and phenylalanine 404.

Belongs to the acyl-CoA dehydrogenase family. Homotetramer. Requires FAD as cofactor.

The protein resides in the mitochondrion matrix. It catalyses the reaction glutaryl-CoA + oxidized [electron-transfer flavoprotein] + 2 H(+) = (2E)-butenoyl-CoA + reduced [electron-transfer flavoprotein] + CO2. It participates in amino-acid metabolism; lysine degradation. Its pathway is amino-acid metabolism; tryptophan metabolism. Functionally, catalyzes the oxidative decarboxylation of glutaryl-CoA to crotonyl-CoA and CO(2) in the degradative pathway of L-lysine, L-hydroxylysine, and L-tryptophan metabolism. It uses electron transfer flavoprotein as its electron acceptor. This Sus scrofa (Pig) protein is Glutaryl-CoA dehydrogenase, mitochondrial (GCDH).